Consider the following 169-residue polypeptide: Translationally-controlled tumor protein homolog (169 aa).

The TCTP domain occupies 1 to 169; it reads MIIYKDIVSG…FKDGLEEEKF (169 aa).

The protein belongs to the TCTP family.

Its subcellular location is the cytoplasm. In terms of biological role, involved in calcium binding and microtubule stabilization. In Branchiostoma belcheri (Amphioxus), this protein is Translationally-controlled tumor protein homolog.